Here is a 414-residue protein sequence, read N- to C-terminus: Carboxynorspermidine synthase (414 aa).

It belongs to the saccharopine dehydrogenase family. Carboxynorspermidine synthase subfamily.

It catalyses the reaction carboxynorspermidine + NADP(+) + H2O = L-aspartate 4-semialdehyde + propane-1,3-diamine + NADPH + H(+). The enzyme catalyses carboxyspermidine + NADP(+) + H2O = L-aspartate 4-semialdehyde + putrescine + NADPH + H(+). Functionally, involved in norspermidine biosynthesis. Catalyzes the synthesis of carboxynorspermidine from L-aspartate 4-semialdehyde and 1,3-diaminopropane. Is also active with putrescine as a substrate. Essential for biofilm formation. The polypeptide is Carboxynorspermidine synthase (Vibrio cholerae serotype O1 (strain ATCC 39315 / El Tor Inaba N16961)).